The sequence spans 237 residues: MRPSKRAPEELRKVTLERGVARYAEGSCLVTFGETRVLCTASLEERGPSWLRGSGKGWITAEYAMLPRATHERNRREVNAGKPSGRTQEIQRLIGRSLRAVVNLPAIGERQIVIDCDVLQADGGTRTASITGAWVALHECFTWMRSRSIISVDPMRDHVAAVSCGIHKGTPILDLDYAEDSAAETDANFVITGSGGIVEVQGTAEVTPFSEEEFLGLLRLAKSGVAQLVALQKQAVG.

Phosphate contacts are provided by residues R86 and 124 to 126 (GTR).

The protein belongs to the RNase PH family. As to quaternary structure, homohexameric ring arranged as a trimer of dimers.

It carries out the reaction tRNA(n+1) + phosphate = tRNA(n) + a ribonucleoside 5'-diphosphate. In terms of biological role, phosphorolytic 3'-5' exoribonuclease that plays an important role in tRNA 3'-end maturation. Removes nucleotide residues following the 3'-CCA terminus of tRNAs; can also add nucleotides to the ends of RNA molecules by using nucleoside diphosphates as substrates, but this may not be physiologically important. Probably plays a role in initiation of 16S rRNA degradation (leading to ribosome degradation) during starvation. The protein is Ribonuclease PH of Methylobacterium nodulans (strain LMG 21967 / CNCM I-2342 / ORS 2060).